A 185-amino-acid polypeptide reads, in one-letter code: Elongation factor P (185 aa).

It belongs to the elongation factor P family.

The protein resides in the cytoplasm. The protein operates within protein biosynthesis; polypeptide chain elongation. Functionally, involved in peptide bond synthesis. Stimulates efficient translation and peptide-bond synthesis on native or reconstituted 70S ribosomes in vitro. Probably functions indirectly by altering the affinity of the ribosome for aminoacyl-tRNA, thus increasing their reactivity as acceptors for peptidyl transferase. This chain is Elongation factor P, found in Aromatoleum aromaticum (strain DSM 19018 / LMG 30748 / EbN1) (Azoarcus sp. (strain EbN1)).